The chain runs to 150 residues: MSKRKTKEPKVENVTLGPAVREGEQVFGVVHVFASFNDTFIHVTDLSGRETLVRITGGMKVKADRDESSPYAAMLAAQDVAQRCKELGITAIHVKLRATGGNKTKTPGPGAQSALRALARSGMKIGRIEDVTPIPTDSTRRKGGRRGRRL.

It belongs to the universal ribosomal protein uS11 family.

It is found in the cytoplasm. In Arabidopsis thaliana (Mouse-ear cress), this protein is Small ribosomal subunit protein uS11x (RPS14C).